Consider the following 106-residue polypeptide: Large ribosomal subunit protein uL23 (106 aa).

Belongs to the universal ribosomal protein uL23 family. In terms of assembly, part of the 50S ribosomal subunit. Contacts protein L29, and trigger factor when it is bound to the ribosome.

Its function is as follows. One of the early assembly proteins it binds 23S rRNA. One of the proteins that surrounds the polypeptide exit tunnel on the outside of the ribosome. Forms the main docking site for trigger factor binding to the ribosome. The protein is Large ribosomal subunit protein uL23 of Acinetobacter baumannii (strain SDF).